The sequence spans 259 residues: Global transcriptional regulator CodY (259 aa).

Residues 1 to 155 are GAF domain; it reads MNLLEKTRKI…GATVVGMEIL (155 aa). The H-T-H motif DNA-binding region spans 203 to 222; that stretch reads ASKIADRVGITRSVIVNALR. The residue at position 215 (Ser215) is a Phosphoserine.

The protein belongs to the CodY family.

Its subcellular location is the cytoplasm. In terms of biological role, DNA-binding global transcriptional regulator which is involved in the adaptive response to starvation and acts by directly or indirectly controlling the expression of numerous genes in response to nutrient availability. During rapid exponential growth, CodY is highly active and represses genes whose products allow adaptation to nutrient depletion. In Lysinibacillus sphaericus (strain C3-41), this protein is Global transcriptional regulator CodY.